Here is a 340-residue protein sequence, read N- to C-terminus: Phosphate acyltransferase (340 aa).

Belongs to the PlsX family. As to quaternary structure, homodimer. Probably interacts with PlsY.

The protein localises to the cytoplasm. The catalysed reaction is a fatty acyl-[ACP] + phosphate = an acyl phosphate + holo-[ACP]. The protein operates within lipid metabolism; phospholipid metabolism. In terms of biological role, catalyzes the reversible formation of acyl-phosphate (acyl-PO(4)) from acyl-[acyl-carrier-protein] (acyl-ACP). This enzyme utilizes acyl-ACP as fatty acyl donor, but not acyl-CoA. This is Phosphate acyltransferase from Trichodesmium erythraeum (strain IMS101).